The sequence spans 516 residues: Squalene epoxidase 4 (516 aa).

2 helical membrane passes run 2–22 and 43–63; these read TYAW…FHLI and ATDV…YALA. FAD-binding positions include 53-54, 73-74, R81, R153, V169, D335, and M348; these read VA and ER. Residues 435 to 455 form a helical membrane-spanning segment; that stretch reads ILGGMNPHPLTLVLHLVAITL.

This sequence belongs to the squalene monooxygenase family. Requires FAD as cofactor. Expressed mainly in seedlings and inflorescences.

It is found in the membrane. The enzyme catalyses squalene + reduced [NADPH--hemoprotein reductase] + O2 = (S)-2,3-epoxysqualene + oxidized [NADPH--hemoprotein reductase] + H2O + H(+). Its pathway is terpene metabolism; lanosterol biosynthesis; lanosterol from farnesyl diphosphate: step 2/3. In terms of biological role, catalyzes the stereospecific oxidation of squalene to (S)-2,3-epoxysqualene, and is considered to be a rate-limiting enzyme in steroid biosynthesis. This Arabidopsis thaliana (Mouse-ear cress) protein is Squalene epoxidase 4 (SQE4).